A 239-amino-acid chain; its full sequence is Phosphoribosylaminoimidazole-succinocarboxamide synthase (239 aa).

This sequence belongs to the SAICAR synthetase family.

It carries out the reaction 5-amino-1-(5-phospho-D-ribosyl)imidazole-4-carboxylate + L-aspartate + ATP = (2S)-2-[5-amino-1-(5-phospho-beta-D-ribosyl)imidazole-4-carboxamido]succinate + ADP + phosphate + 2 H(+). It functions in the pathway purine metabolism; IMP biosynthesis via de novo pathway; 5-amino-1-(5-phospho-D-ribosyl)imidazole-4-carboxamide from 5-amino-1-(5-phospho-D-ribosyl)imidazole-4-carboxylate: step 1/2. In Bacillus thuringiensis subsp. konkukian (strain 97-27), this protein is Phosphoribosylaminoimidazole-succinocarboxamide synthase.